The chain runs to 781 residues: Protein argonaute (781 aa).

The PAZ domain maps to 110–194; sequence SMNELLTERR…RHNDYCNSVM (85 aa). A Piwi domain is found at 436-760; the sequence is LVVIVIPGPK…LSKFCGEVLR (325 aa).

The protein belongs to the argonaute family. Ago subfamily. In terms of assembly, interacts with miR2. Highly specific binding to the mRNA m7G-cap. May be a component of the RNA-induced silencing complex (RISC), a sequence-specific, multicomponent nuclease that destroys or silences messenger RNAs homologous to the silencing trigger.

The protein resides in the cytoplasm. In terms of biological role, plays an essential role in growth and, with Dicer, also involved in microRNA (miRNA)-mediated translational repression. The RNA interference pathway is implicated in antigenic variation having a role in regulation of variant-specific surface protein (VSP)-coding gene expression. Several VSP genes are transcribed but only transcripts encoding the VSP to be expressed accumulate. Antisense RNAs corresponding to the silenced VSP genes are detected. In Giardia intestinalis (Giardia lamblia), this protein is Protein argonaute.